The primary structure comprises 1011 residues: Lysosomal alpha-mannosidase (1011 aa).

Positions 1 to 49 (MGAYARASGVCARGCLDSAGPWTMSRALRPPLPPLCFFLLLLAAAGARA) are cleaved as a signal peptide. 2 disulfides stabilise this stretch: Cys-55–Cys-358 and Cys-268–Cys-273. His-72 and Asp-74 together coordinate Zn(2+). Residue Asn-133 is glycosylated (N-linked (GlcNAc...) asparagine). Asp-196 serves as a coordination point for Zn(2+). Residue Asp-196 is the Nucleophile of the active site. N-linked (GlcNAc...) asparagine glycans are attached at residues Asn-310 and Asn-367. 2 disulfides stabilise this stretch: Cys-412/Cys-472 and Cys-493/Cys-501. His-446 contributes to the Zn(2+) binding site. Asn-497, Asn-645, Asn-651, Asn-692, Asn-766, Asn-832, Asn-930, and Asn-989 each carry an N-linked (GlcNAc...) asparagine glycan.

It belongs to the glycosyl hydrolase 38 family. Zn(2+) serves as cofactor. Post-translationally, first processed into 3 peptides of 70 kDa, 42 kDa (D) and 13/15 kDa (E). The 70 kDa peptide is further processed into three peptides (A, B and C). The A, B and C peptides are disulfide-linked. Heavily glycosylated.

It is found in the lysosome. It catalyses the reaction Hydrolysis of terminal, non-reducing alpha-D-mannose residues in alpha-D-mannosides.. Its function is as follows. Necessary for the catabolism of N-linked carbohydrates released during glycoprotein turnover. Cleaves all known types of alpha-mannosidic linkages. This chain is Lysosomal alpha-mannosidase (MAN2B1), found in Homo sapiens (Human).